The sequence spans 474 residues: Nuclear hormone receptor family member nhr-91 (474 aa).

The disordered stretch occupies residues 50–69 (SMTPSFSQTESPNSETDDST). Residues 51–69 (MTPSFSQTESPNSETDDST) show a composition bias toward polar residues. A DNA-binding region (nuclear receptor) is located at residues 97-172 (SKLCSVCGDK…KGMLTEAVRE (76 aa)). 2 NR C4-type zinc fingers span residues 100-120 (CSVCGDKSTGLHYGAATCEGC) and 136-155 (CSQDNCCEIDKQNRNRCQSC). The NR LBD domain occupies 215 to 474 (SGKKLIKELV…KNPRRLVFDE (260 aa)).

Belongs to the nuclear hormone receptor family.

The protein resides in the nucleus. Orphan nuclear receptor. The protein is Nuclear hormone receptor family member nhr-91 (nhr-91) of Caenorhabditis elegans.